Reading from the N-terminus, the 701-residue chain is Elongation factor G 1 (701 aa).

Residues 8–290 (ERYRNIGISA…AVIDYLPSPL (283 aa)) form the tr-type G domain. GTP contacts are provided by residues 17–24 (AHIDAGKT), 88–92 (DTPGH), and 142–145 (NKMD).

The protein belongs to the TRAFAC class translation factor GTPase superfamily. Classic translation factor GTPase family. EF-G/EF-2 subfamily.

Its subcellular location is the cytoplasm. Catalyzes the GTP-dependent ribosomal translocation step during translation elongation. During this step, the ribosome changes from the pre-translocational (PRE) to the post-translocational (POST) state as the newly formed A-site-bound peptidyl-tRNA and P-site-bound deacylated tRNA move to the P and E sites, respectively. Catalyzes the coordinated movement of the two tRNA molecules, the mRNA and conformational changes in the ribosome. This is Elongation factor G 1 from Paraburkholderia xenovorans (strain LB400).